The primary structure comprises 153 residues: 6,7-dimethyl-8-ribityllumazine synthase (153 aa).

Residues F22, 56-58 (AFE), and 80-82 (AVI) each bind 5-amino-6-(D-ribitylamino)uracil. 85–86 (ST) contributes to the (2S)-2-hydroxy-3-oxobutyl phosphate binding site. Residue H88 is the Proton donor of the active site. F113 provides a ligand contact to 5-amino-6-(D-ribitylamino)uracil. R127 contacts (2S)-2-hydroxy-3-oxobutyl phosphate.

Belongs to the DMRL synthase family.

It catalyses the reaction (2S)-2-hydroxy-3-oxobutyl phosphate + 5-amino-6-(D-ribitylamino)uracil = 6,7-dimethyl-8-(1-D-ribityl)lumazine + phosphate + 2 H2O + H(+). It functions in the pathway cofactor biosynthesis; riboflavin biosynthesis; riboflavin from 2-hydroxy-3-oxobutyl phosphate and 5-amino-6-(D-ribitylamino)uracil: step 1/2. Functionally, catalyzes the formation of 6,7-dimethyl-8-ribityllumazine by condensation of 5-amino-6-(D-ribitylamino)uracil with 3,4-dihydroxy-2-butanone 4-phosphate. This is the penultimate step in the biosynthesis of riboflavin. The protein is 6,7-dimethyl-8-ribityllumazine synthase of Clostridium botulinum (strain Alaska E43 / Type E3).